A 363-amino-acid chain; its full sequence is 24-methylenesterol C-methyltransferase 2 (363 aa).

A helical transmembrane segment spans residues 6–26 (MAWTAAGVGMALVYWFVWVMG).

It belongs to the class I-like SAM-binding methyltransferase superfamily. Erg6/SMT family.

It is found in the membrane. It catalyses the reaction 24-methylidenelophenol + S-adenosyl-L-methionine = (Z)-24-ethylidenelophenol + S-adenosyl-L-homocysteine + H(+). It functions in the pathway steroid biosynthesis; sterol biosynthesis. Catalyzes the methyl transfer from S-adenosyl-methionine to the methylene group of 24-methylene lophenol to form 24-ethylidene lophenol. The sequence is that of 24-methylenesterol C-methyltransferase 2 (Smt2-1) from Oryza sativa subsp. japonica (Rice).